Consider the following 130-residue polypeptide: uncharacterized protein (130 aa).

A signal peptide spans 1-26 (MINNFKGILIIILSFLFLLLFKYSNA). The N-linked (GlcNAc...) asparagine glycan is linked to Asn-58.

The protein belongs to the Dictyostelium gerABC family.

It localises to the secreted. This is an uncharacterized protein from Dictyostelium discoideum (Social amoeba).